The chain runs to 432 residues: Trigger factor (432 aa).

A PPIase FKBP-type domain is found at 163–248 (GDIAVIDFEG…LKALNKKELP (86 aa)).

It belongs to the FKBP-type PPIase family. Tig subfamily.

Its subcellular location is the cytoplasm. The enzyme catalyses [protein]-peptidylproline (omega=180) = [protein]-peptidylproline (omega=0). Its function is as follows. Involved in protein export. Acts as a chaperone by maintaining the newly synthesized protein in an open conformation. Functions as a peptidyl-prolyl cis-trans isomerase. This chain is Trigger factor, found in Caldanaerobacter subterraneus subsp. tengcongensis (strain DSM 15242 / JCM 11007 / NBRC 100824 / MB4) (Thermoanaerobacter tengcongensis).